The following is a 334-amino-acid chain: Anthranilate phosphoribosyltransferase (334 aa).

5-phospho-alpha-D-ribose 1-diphosphate is bound by residues Gly-81, 84–85, Thr-89, 91–94, 109–117, and Ala-121; these read GD, NIST, and KHGSRSVSS. Gly-81 serves as a coordination point for anthranilate. Ser-93 is a binding site for Mg(2+). Residue Arg-167 participates in anthranilate binding. Mg(2+) is bound by residues Asp-225 and Glu-226.

Belongs to the anthranilate phosphoribosyltransferase family. Homodimer. Requires Mg(2+) as cofactor.

The enzyme catalyses N-(5-phospho-beta-D-ribosyl)anthranilate + diphosphate = 5-phospho-alpha-D-ribose 1-diphosphate + anthranilate. The protein operates within amino-acid biosynthesis; L-tryptophan biosynthesis; L-tryptophan from chorismate: step 2/5. Functionally, catalyzes the transfer of the phosphoribosyl group of 5-phosphorylribose-1-pyrophosphate (PRPP) to anthranilate to yield N-(5'-phosphoribosyl)-anthranilate (PRA). This Actinobacillus pleuropneumoniae serotype 7 (strain AP76) protein is Anthranilate phosphoribosyltransferase.